We begin with the raw amino-acid sequence, 1111 residues long: MKPFYSMSLVLFLVITLLPKPMFPQVATGTTGNVIRVGFIHCRDFQSAPITVGYRTSAAAASIAVDRLKRENLMSGWEFNFTIEFDDCVESEAAGMTVDLIEKHNVDVIIGPTMNQPTLAAFIVSNYFNRPIIAWGLVNAAQLDDFERFPNAGILSAGQRSLGVAIRAVLKRYEWSQFVYAYFTEEDTEKCVTMRNDLQQVVSYFGDIILAYSIQVADISNDGMIEALKKIQSRGRIIVTCMKDGIGLRRKWLLAAEEAGMIGDEYVYVFSDIKSKGYVVPLLGGGERPSWILSTGSDENDTRALKAFKQSIFICDMMGQGSIATNYTIFGQEIIARMKEAPYFCTKDCEGENFTVAATYAGQLHDAVYAYGVALDKMLKAGQIAQYRNATAFMRYFPQSFIGMSGNVTINEKGTRNPTLFLLALDENNNNTRMATIYVENMSATFNALYSDEGVMWASRKNNARPVDVPLCGFTGNLCPKSFVDEYLIWVIVAIVVLFLAITAAACGIYFSIQARRQEIERLNRLWQIPFIHLHQINSKQKGKGEHSVRSLQSGTSTLSSRTTVSFKTESRNFLFFSLQRESDYEPVVAKKHAYRPRLDDDKCTFMRSLRNLDQDNLNRFIGLCLDGPQMLSVWRFCSRGSIADVILKATIQMDNFFIYSLIKDMVHGLVFLHGSMVGYHGMLTSKCCLIDDRWQVKISNYGLQDLRSPEMYEKKDLLWSAPELLRAEDIKGSKEGDVYSLGIICAELITRKGVFNMEDRKEDPEEIIYLLKKGGLKSPRPDLEYDHTIEINPALLHLVRDCFTERPSERPSIETVRSQLRGMNSSRNDNLMDHVFNMLESYASSLEEEVSERTKELVEEKKKSDVLLYRMLPKTVADKLKLGQTVEPETFEQVTIFFSDVVQFTTLASKCTPLQVVNLLNDLYTIFDGIIEKHDVYKVETIGDGYLCVSGLPHRNGNEHVRQIALMSLAFLSSLQFFRVPHLPSERINLRIGMNCGSVVAGVVGLTMPRFCLFGDAVNTASRMESNGKPGKIHVSAEANRMLHLVGGFDTESRGEVIIKGKGVMETFWLTGQGTGAVSGARHVSAKKVSKKMDEIHRQETLKSDEQLSD.

An N-terminal signal peptide occupies residues Met-1–Pro-24. The Extracellular portion of the chain corresponds to Gln-25–Leu-488. N-linked (GlcNAc...) asparagine glycans are attached at residues Asn-80, Asn-300, Asn-326, Asn-353, Asn-389, Asn-407, Asn-430, and Asn-441. A helical transmembrane segment spans residues Ile-489 to Ile-509. At Tyr-510–Asp-1111 the chain is on the cytoplasmic side. The 303-residue stretch at Gln-536 to Asn-838 folds into the Protein kinase domain. Residues Lys-542–Arg-550 and Lys-568 contribute to the ATP site. The Guanylate cyclase domain occupies Thr-896–Glu-1026.

Belongs to the adenylyl cyclase class-4/guanylyl cyclase family. As to expression, expressed asymmetrically in ASE left (ASEL) sensory neuron. Expressed in excretory canal cell.

The protein resides in the cell membrane. The enzyme catalyses GTP = 3',5'-cyclic GMP + diphosphate. In terms of biological role, guanylate cyclase involved in the production of the second messenger cGMP. Unlike other guanylate cyclases expressed in ASE neurons, may not play a role in chemotaxis responses toward salt ions in ASEL (ASE left) sensory neurons. This Caenorhabditis elegans protein is Receptor-type guanylate cyclase gcy-7.